The following is a 313-amino-acid chain: Small ribosomal subunit biogenesis GTPase RsgA (313 aa).

The CP-type G domain occupies 82–235 (REKLIAANAT…IIDSPGIQQF (154 aa)). GTP is bound by residues 127–130 (NKTD) and 177–185 (GQSGMGKST). 4 residues coordinate Zn(2+): C259, C264, H266, and C272.

The protein belongs to the TRAFAC class YlqF/YawG GTPase family. RsgA subfamily. Monomer. Associates with 30S ribosomal subunit, binds 16S rRNA. It depends on Zn(2+) as a cofactor.

Its subcellular location is the cytoplasm. Functionally, one of several proteins that assist in the late maturation steps of the functional core of the 30S ribosomal subunit. Helps release RbfA from mature subunits. May play a role in the assembly of ribosomal proteins into the subunit. Circularly permuted GTPase that catalyzes slow GTP hydrolysis, GTPase activity is stimulated by the 30S ribosomal subunit. The sequence is that of Small ribosomal subunit biogenesis GTPase RsgA from Nitrosospira multiformis (strain ATCC 25196 / NCIMB 11849 / C 71).